We begin with the raw amino-acid sequence, 214 residues long: Adenylate kinase (214 aa).

10-15 (GAGKGT) contacts ATP. Residues 30–59 (STGDMLRAAVKAQTPVGLKAKAVMDRGELV) are NMP. Residues T31, R36, 57-59 (ELV), 85-88 (GYPR), and Q92 contribute to the AMP site. The interval 126-163 (GRFTCAKCGTGYHDRHKQPAREGVCDVCGSTEFKRRPD) is LID. R127 is a binding site for ATP. 4 residues coordinate Zn(2+): C130, C133, C150, and C153. AMP-binding residues include R160 and R172. G200 serves as a coordination point for ATP.

Belongs to the adenylate kinase family. In terms of assembly, monomer.

Its subcellular location is the cytoplasm. It carries out the reaction AMP + ATP = 2 ADP. The protein operates within purine metabolism; AMP biosynthesis via salvage pathway; AMP from ADP: step 1/1. Catalyzes the reversible transfer of the terminal phosphate group between ATP and AMP. Plays an important role in cellular energy homeostasis and in adenine nucleotide metabolism. This chain is Adenylate kinase, found in Erythrobacter litoralis (strain HTCC2594).